We begin with the raw amino-acid sequence, 274 residues long: E3 ubiquitin-protein ligase complex SLX5-SLX8 subunit SLX8 (274 aa).

Disordered stretches follow at residues 1–117 and 136–159; these read MARR…GNNI and ANTP…TNSK. A compositionally biased stretch (basic and acidic residues) spans 13–28; it reads ENLRIKRVRLESVRQN. S50 carries the post-translational modification Phosphoserine. Phosphothreonine is present on T66. Over residues 66 to 75 the composition is skewed to acidic residues; the sequence is TSEEDGDDDL. Residue S67 is modified to Phosphoserine. Over residues 97–108 the composition is skewed to basic and acidic residues; sequence GNHDRETMHTEE. The segment at 206-250 adopts an RING-type zinc-finger fold; that stretch reads CPICFEPPETALMTLCGHVFCCPCLFQMVNSSRTCRQFGHCALCR.

In terms of assembly, component of the heterodimeric SUMO-targeted ubiquitin ligase (STUbL) complex composed of SLX5 and SLX8.

It is found in the nucleus. The protein localises to the chromosome. Its subcellular location is the centromere. The protein resides in the kinetochore. The enzyme catalyses S-ubiquitinyl-[E2 ubiquitin-conjugating enzyme]-L-cysteine + [acceptor protein]-L-lysine = [E2 ubiquitin-conjugating enzyme]-L-cysteine + N(6)-ubiquitinyl-[acceptor protein]-L-lysine.. It functions in the pathway protein modification; protein ubiquitination. Component of the SUMO-targeted ubiquitin ligase (STUbL) complex SLX5/SLX8 that mediates ubiquitination and subsequent desumoylation of sumoylated proteins and proteins containing SUMO-like domains for their degradation. The STUbL complex SLX5/SLX8 stimulates ubiquitin conjugating enzymes, including UBC1, UBC4, UBC5 and UBC13-MMS2, and mediates the proteolytic down-regulation of sumoylated proteins. The STUbL complex SLX5/SLX8 is involved in ubiquitin-mediated degradation of histone variant CSE4, preventing mislocalization to euchromatin. The complex plays an essential role in maintenance of chromosome stability and links SUMO-dependent ubiquitination to a centromere-specific function during mitosis. The complex is involved in proteolysis of spindle positioning protein KAR9 and ensures correct spindle function by regulating levels of microtubule-associated proteins. During replication, the complex helps to prevent DNA lesions via recombination and has a role in localizing the DNA damage protein DCD2. The complex especially ubiquitinates the nuclease YEN1 and prevents persistent accumulation of a fraction of YEN1 associated with sites of activity in late G2/M and helps maintain the balance between pro- and anti-crossover pathways during homologous recombination. It is also involved in ubiquitin-mediated degradation of DNA repair proteins RAD52 and RAD57. Finally, the complex is recruited to distinct genomic hotspots of non-H2B protein ubiquitination (ub-hotspots) by the sumoylated transcription factor-like protein EUC1 where it ubiquitinates EUC1 and presumably other targets. This Saccharomyces cerevisiae (strain ATCC 204508 / S288c) (Baker's yeast) protein is E3 ubiquitin-protein ligase complex SLX5-SLX8 subunit SLX8 (SLX8).